The sequence spans 534 residues: CTP synthase (534 aa).

Positions 1-265 (MKYIVVTGGV…TTRLMKHLKL (265 aa)) are amidoligase domain. Serine 12 contributes to the CTP binding site. Serine 12 contacts UTP. 13–18 (GLGKGI) is an ATP binding site. Residue tyrosine 53 participates in L-glutamine binding. Aspartate 70 provides a ligand contact to ATP. The Mg(2+) site is built by aspartate 70 and glutamate 140. Residues 147–149 (DIE), 186–191 (KTKPSQ), and lysine 222 each bind CTP. UTP is bound by residues 186–191 (KTKPSQ) and lysine 222. A Glutamine amidotransferase type-1 domain is found at 289–530 (KLAIVGKYTN…VRAMCKYNKE (242 aa)). Glycine 352 lines the L-glutamine pocket. Cysteine 379 acts as the Nucleophile; for glutamine hydrolysis in catalysis. Residues 380 to 383 (LGMQ), glutamate 403, and arginine 460 each bind L-glutamine. Catalysis depends on residues histidine 503 and glutamate 505.

It belongs to the CTP synthase family. As to quaternary structure, homotetramer.

The catalysed reaction is UTP + L-glutamine + ATP + H2O = CTP + L-glutamate + ADP + phosphate + 2 H(+). It carries out the reaction L-glutamine + H2O = L-glutamate + NH4(+). It catalyses the reaction UTP + NH4(+) + ATP = CTP + ADP + phosphate + 2 H(+). It functions in the pathway pyrimidine metabolism; CTP biosynthesis via de novo pathway; CTP from UDP: step 2/2. Allosterically activated by GTP, when glutamine is the substrate; GTP has no effect on the reaction when ammonia is the substrate. The allosteric effector GTP functions by stabilizing the protein conformation that binds the tetrahedral intermediate(s) formed during glutamine hydrolysis. Inhibited by the product CTP, via allosteric rather than competitive inhibition. Catalyzes the ATP-dependent amination of UTP to CTP with either L-glutamine or ammonia as the source of nitrogen. Regulates intracellular CTP levels through interactions with the four ribonucleotide triphosphates. The chain is CTP synthase from Methanosarcina acetivorans (strain ATCC 35395 / DSM 2834 / JCM 12185 / C2A).